The sequence spans 146 residues: Angiogenin (146 aa).

The N-terminal stretch at 1–24 is a signal peptide; sequence MVMGLGLFLLVFMLGLGLTPPTLA. At glutamine 25 the chain carries Pyrrolidone carboxylic acid. Histidine 37 serves as the catalytic Proton acceptor. Arginine 45 lines the tRNA pocket. Disulfide bonds link cysteine 50-cysteine 105, cysteine 63-cysteine 116, and cysteine 81-cysteine 131. The Nucleolar localization signal signature appears at 55 to 59; it reads RRRHL. Positions 105 and 127 each coordinate tRNA. Histidine 138 functions as the Proton donor in the catalytic mechanism.

The protein belongs to the pancreatic ribonuclease family. Homodimer. Interacts with RNH1; inhibiting ANG ribonuclease activity. Interacts with PCNA.

The protein localises to the secreted. It is found in the nucleus. It localises to the nucleolus. The protein resides in the cytoplasm. Its subcellular location is the stress granule. Has weak tRNA ribonuclease activity by itself due to partial autoinhibition by its C-terminus, which folds into a short alpha-helix that partially occludes the substrate-binding site. In absence of stress, the ribonuclease activity is inhibited by RNH1 in the cytoplasm. In response to stress, dissociates from RNH1 in the cytoplasm and associates with cytoplasmic ribosomes with vacant A-sites: ribosomes directly activate the tRNA ribonuclease activity of ANG by refolding the C-terminal alpha-helix. In response to stress, the angiogenic activity of ANG is inhibited by RNH1 in the nucleus. Secreted ribonuclease that can either promote or restrict cell proliferation of target cells, depending on the context. Endocytosed in target cells via its receptor PLXNB2 and translocates to the cytoplasm or nucleus. Under stress conditions, localizes to the cytoplasm and promotes the assembly of stress granules (SGs): specifically cleaves a subset of tRNAs within anticodon loops to produce tRNA-derived stress-induced fragments (tiRNAs), resulting in translation repression and inhibition of cell proliferation. tiRNas also prevent formation of apoptosome, thereby promoting cell survival. Preferentially cleaves RNAs between a pyrimidine and an adenosine residue, suggesting that it cleaves the anticodon loop of tRNA(Ala) (32-UUAGCAU-38) after positions 33 and 36. Cleaves a subset of tRNAs, including tRNA(Ala), tRNA(Glu), tRNA(Gly), tRNA(Lys), tRNA(Val), tRNA(His), tRNA(Asp) and tRNA(Sec). Under growth conditions and in differentiated cells, translocates to the nucleus and stimulates ribosomal RNA (rRNA) transcription, including that containing the initiation site sequences of 45S rRNA, thereby promoting cell growth and proliferation. Angiogenin induces vascularization of normal and malignant tissues via its ability to promote rRNA transcription. Involved in hematopoietic stem and progenitor cell (HSPC) growth and survival by promoting rRNA transcription in growth conditions and inhibiting translation in response to stress, respectively. Mediates the crosstalk between myeloid and intestinal epithelial cells to protect the intestinal epithelial barrier integrity: secreted by myeloid cells and promotes intestinal epithelial cells proliferation and survival. Also mediates osteoclast-endothelial cell crosstalk in growing bone: produced by osteoclasts and protects the neighboring vascular cells against senescence by promoting rRNA transcription. This chain is Angiogenin (ANG), found in Chlorocebus aethiops (Green monkey).